The chain runs to 129 residues: Small ribosomal subunit protein bS16m (129 aa).

Belongs to the bacterial ribosomal protein bS16 family. In terms of assembly, component of the mitochondrial ribosome small subunit (28S) which comprises a 12S rRNA and about 30 distinct proteins.

Its subcellular location is the mitochondrion. This Drosophila melanogaster (Fruit fly) protein is Small ribosomal subunit protein bS16m (mRpS16).